A 136-amino-acid chain; its full sequence is Galectin-7 (136 aa).

The Galectin domain occupies 6 to 136 (HKTPLPQGVR…DVQLHSVKIF (131 aa)). Position 70–76 (70–76 (WGREERG)) interacts with a beta-D-galactoside.

Monomer.

The protein resides in the cytoplasm. It localises to the nucleus. Its subcellular location is the secreted. Could be involved in cell-cell and/or cell-matrix interactions necessary for normal growth control. Pro-apoptotic protein that functions intracellularly upstream of JNK activation and cytochrome c release. The polypeptide is Galectin-7 (Lgals7) (Rattus norvegicus (Rat)).